The chain runs to 212 residues: Pyridoxine/pyridoxamine 5'-phosphate oxidase (212 aa).

Residues 7–10 (RAKY) and K65 contribute to the substrate site. FMN contacts are provided by residues 60 to 65 (RTVLLK), 75 to 76 (FT), K82, and Q104. Y122, R126, and S130 together coordinate substrate. Residues 139-140 (QS) and W184 each bind FMN. Residue 190 to 192 (RLH) coordinates substrate. Position 194 (R194) interacts with FMN.

It belongs to the pyridoxamine 5'-phosphate oxidase family. Homodimer. The cofactor is FMN.

The catalysed reaction is pyridoxamine 5'-phosphate + O2 + H2O = pyridoxal 5'-phosphate + H2O2 + NH4(+). It carries out the reaction pyridoxine 5'-phosphate + O2 = pyridoxal 5'-phosphate + H2O2. It functions in the pathway cofactor metabolism; pyridoxal 5'-phosphate salvage; pyridoxal 5'-phosphate from pyridoxamine 5'-phosphate: step 1/1. The protein operates within cofactor metabolism; pyridoxal 5'-phosphate salvage; pyridoxal 5'-phosphate from pyridoxine 5'-phosphate: step 1/1. In terms of biological role, catalyzes the oxidation of either pyridoxine 5'-phosphate (PNP) or pyridoxamine 5'-phosphate (PMP) into pyridoxal 5'-phosphate (PLP). This Aliarcobacter butzleri (strain RM4018) (Arcobacter butzleri) protein is Pyridoxine/pyridoxamine 5'-phosphate oxidase.